A 380-amino-acid polypeptide reads, in one-letter code: Cytochrome b (380 aa).

Transmembrane regions (helical) follow at residues 33–53, 77–98, 113–133, and 178–198; these read FGSLLGACLILQITTGLFLAM, WTIRYLHANGASMFFICLFLHI, WNIGIILLLTTMAAAFMGYVL, and FFTFHFILPFIITALTTLHLL. H83 and H97 together coordinate heme b. Positions 182 and 196 each coordinate heme b. H201 is an a ubiquinone binding site. 4 helical membrane passes run 226 to 246, 288 to 308, 320 to 340, and 347 to 367; these read IKDILGLFLFLLTLMTLTLFS, LGGVLALLLSILILAMIPILH, LSQLLYWFLIADLFTLTWIGG, and FITIGQVASVLYFTTILFLMP.

This sequence belongs to the cytochrome b family. As to quaternary structure, the cytochrome bc1 complex contains 11 subunits: 3 respiratory subunits (MT-CYB, CYC1 and UQCRFS1), 2 core proteins (UQCRC1 and UQCRC2) and 6 low-molecular weight proteins (UQCRH/QCR6, UQCRB/QCR7, UQCRQ/QCR8, UQCR10/QCR9, UQCR11/QCR10 and a cleavage product of UQCRFS1). This cytochrome bc1 complex then forms a dimer. Requires heme b as cofactor.

Its subcellular location is the mitochondrion inner membrane. Component of the ubiquinol-cytochrome c reductase complex (complex III or cytochrome b-c1 complex) that is part of the mitochondrial respiratory chain. The b-c1 complex mediates electron transfer from ubiquinol to cytochrome c. Contributes to the generation of a proton gradient across the mitochondrial membrane that is then used for ATP synthesis. This chain is Cytochrome b (MT-CYB), found in Gorilla gorilla gorilla (Western lowland gorilla).